A 203-amino-acid chain; its full sequence is Cytochrome c oxidase assembly protein CtaG (203 aa).

Residues 1–19 (MDAGKAERRAGNGRRTDGR) are Cytoplasmic-facing. A helical; Signal-anchor for type II membrane protein transmembrane segment spans residues 20–42 (RHLVVAAACAAFIAAMVGVTYAS). The Periplasmic segment spans residues 43 to 203 (VPLYAMFCAL…AAARASGTGG (161 aa)).

This sequence belongs to the COX11/CtaG family.

It localises to the cell inner membrane. Its function is as follows. Exerts its effect at some terminal stage of cytochrome c oxidase synthesis, probably by being involved in the insertion of the copper B into subunit I. The chain is Cytochrome c oxidase assembly protein CtaG from Xanthobacter autotrophicus (strain ATCC BAA-1158 / Py2).